Here is a 314-residue protein sequence, read N- to C-terminus: Olfactory receptor 8D4 (314 aa).

Residues 1 to 25 (MGVKNHSTVTEFLLSGLTEQAELQL) lie on the Extracellular side of the membrane. Residue Asn5 is glycosylated (N-linked (GlcNAc...) asparagine). The helical transmembrane segment at 26–46 (PLFCLFLGIYTVTVVGNLSMI) threads the bilayer. Topologically, residues 47-54 (SIIRLNRQ) are cytoplasmic. Residues 55 to 75 (LHTPMYYFLSSLSFLDFCYSS) traverse the membrane as a helical segment. The Extracellular portion of the chain corresponds to 76–99 (VITPKMLSGFLCRDRSISYSGCMI). Residues Cys97 and Cys189 are joined by a disulfide bond. Residues 100–120 (QLFFFCVCVISECYMLAAMAC) traverse the membrane as a helical segment. Topologically, residues 121–139 (DRYVAICSPLLYRVIMSPR) are cytoplasmic. A helical transmembrane segment spans residues 140-160 (VCSLLVAAVFSVGFTDAVIHG). The Extracellular portion of the chain corresponds to 161 to 197 (GCILRLSFCGSNIIKHYFCDIVPLIKLSCSSTYIDEL). Residues 198 to 217 (LIFVIGGFNMVATSLTIIIS) form a helical membrane-spanning segment. Residues 218–237 (YAFILTSILRIHSKKGRCKA) lie on the Cytoplasmic side of the membrane. A helical membrane pass occupies residues 238–258 (FSTCSSHLTAVLMFYGSLMSM). Over 259 to 271 (YLKPASSSSLTQE) the chain is Extracellular. A helical transmembrane segment spans residues 272–292 (KVSSVFYTTVILMLNPLIYSL). At 293-314 (RNNEVRNALMKLLRRKISLSPG) the chain is on the cytoplasmic side.

The protein belongs to the G-protein coupled receptor 1 family.

It localises to the cell membrane. Its function is as follows. Odorant receptor. The protein is Olfactory receptor 8D4 (OR8D4) of Homo sapiens (Human).